Reading from the N-terminus, the 28-residue chain is Ornatin-D (28 aa).

The protein belongs to the ornatin family.

Its subcellular location is the secreted. Its function is as follows. Potent inhibitor of fibrinogen interaction with platelet receptors expressed on glycoprotein IIb-IIIa complex. May prevent blood from clotting during either feeding and/or storage of ingested blood. In Placobdella ornata (Turtle leech), this protein is Ornatin-D.